A 431-amino-acid chain; its full sequence is Sorting nexin-31 (431 aa).

The 107-residue stretch at 1-107 (MHICIPVTEE…DYFRKLQMDT (107 aa)) folds into the PX domain.

It belongs to the sorting nexin family.

Functionally, may be involved in protein trafficking. This is Sorting nexin-31 (snx31) from Xenopus laevis (African clawed frog).